A 1118-amino-acid chain; its full sequence is Carbamoyl phosphate synthase arginine-specific large chain (1118 aa).

The tract at residues glutamine 23 to aspartate 420 is carboxyphosphate synthetic domain. ATP-binding residues include arginine 150, arginine 190, glycine 196, glycine 197, lysine 227, leucine 229, glutamate 234, glycine 260, valine 261, histidine 262, glutamine 303, and glutamate 317. The 193-residue stretch at alanine 154–leucine 346 folds into the ATP-grasp 1 domain. The Mg(2+) site is built by glutamine 303, glutamate 317, and asparagine 319. Residues glutamine 303, glutamate 317, and asparagine 319 each contribute to the Mn(2+) site. An oligomerization domain region spans residues proline 421–aspartate 573. The interval valine 574–methionine 958 is carbamoyl phosphate synthetic domain. Positions serine 698 to leucine 890 constitute an ATP-grasp 2 domain. 10 residues coordinate ATP: arginine 734, lysine 773, isoleucine 775, glutamate 780, glycine 805, valine 806, histidine 807, serine 808, glutamine 848, and glutamate 861. Positions 848, 861, and 863 each coordinate Mg(2+). Mn(2+)-binding residues include glutamine 848, glutamate 861, and asparagine 863. The interval asparagine 959–valine 1102 is allosteric domain. Residues phenylalanine 960–tyrosine 1118 enclose the MGS-like domain.

Belongs to the CarB family. Heterodimer composed of 2 chains; the small (or glutamine) chain promotes the hydrolysis of glutamine to ammonia, which is used by the large (or ammonia) chain to synthesize carbamoyl phosphate. Mg(2+) is required as a cofactor. It depends on Mn(2+) as a cofactor.

The protein localises to the cytoplasm. The enzyme catalyses hydrogencarbonate + L-glutamine + 2 ATP + H2O = carbamoyl phosphate + L-glutamate + 2 ADP + phosphate + 2 H(+). The catalysed reaction is hydrogencarbonate + NH4(+) + 2 ATP = carbamoyl phosphate + 2 ADP + phosphate + 2 H(+). The protein operates within amino-acid biosynthesis; L-arginine biosynthesis; carbamoyl phosphate from bicarbonate: step 1/1. In terms of biological role, large subunit of the arginine-specific carbamoyl phosphate synthase (CPSase). CPSase catalyzes the formation of carbamoyl phosphate from the ammonia moiety of glutamine, hydrogencarbonate, and phosphate donated by ATP, constituting the first step of 2 biosynthetic pathways, one leading to arginine and/or urea and the other to pyrimidine nucleotides. The large subunit (synthetase) binds the substrates ammonia (free or transferred from glutamine from the small subunit), hydrogencarbonate and ATP and carries out an ATP-coupled ligase reaction, activating hydrogencarbonate by forming carboxy phosphate which reacts with ammonia to form carbamoyl phosphate. The polypeptide is Carbamoyl phosphate synthase arginine-specific large chain (CPA2) (Saccharomyces cerevisiae (strain ATCC 204508 / S288c) (Baker's yeast)).